The chain runs to 891 residues: 26S proteasome non-ATPase regulatory subunit 2 homolog A (891 aa).

A disordered region spans residues 1-44 (MAPTQDPNSVGGGAKKDEATLKVPSKDPKKKDEKKDEDLSEEDL). Residues 14 to 21 (AKKDEATL) carry the Nuclear localization signal motif. Residues 14 to 37 (AKKDEATLKVPSKDPKKKDEKKDE) show a composition bias toward basic and acidic residues. K218 is covalently cross-linked (Glycyl lysine isopeptide (Lys-Gly) (interchain with G-Cter in ubiquitin)). T219 carries the O-acetylthreonine modification. PC repeat units lie at residues 414-447 (SAAA…PIIA), 448-484 (GALL…SVRI), 485-519 (GAIM…PLDV), 522-556 (FASL…AELG), 565-594 (LGLG…KIRK), 674-705 (LALG…EVAM), and 724-739 (AGML…KDMS).

Belongs to the proteasome subunit S2 family. In terms of assembly, component of the 19S regulatory particle (RP/PA700) base subcomplex of the 26S proteasome. The 26S proteasome is composed of a core protease (CP), known as the 20S proteasome, capped at one or both ends by the 19S regulatory particle (RP/PA700). The RP/PA700 complex is composed of at least 17 different subunits in two subcomplexes, the base and the lid, which form the portions proximal and distal to the 20S proteolytic core, respectively. Interacts with JMJ27. In terms of tissue distribution, expressed in stems, leaves, buds, flowers, siliques and developing seeds.

Its subcellular location is the nucleus. The protein resides in the cytoplasm. Acts as a regulatory subunit of the 26 proteasome which is involved in the ATP-dependent degradation of ubiquitinated proteins. Required during embryogenesis. Required for optimal plant growth and stress responses. Required for innate immunity. Prevents JMJ27 accumulation in non-drought conditions. The polypeptide is 26S proteasome non-ATPase regulatory subunit 2 homolog A (Arabidopsis thaliana (Mouse-ear cress)).